Here is a 521-residue protein sequence, read N- to C-terminus: Forkhead box protein N4 (521 aa).

The segment at residues 197-293 (KPIYSYSCLI…EEMHKWKRKD (97 aa)) is a DNA-binding region (fork-head). Residues 371–406 (PQAHLAPDSPAPAQTPPLHALPSLSPGPLPQPAMGR) are disordered.

Mainly expressed in proliferator progenitor cells in brain and retina rather than differentiated cells. In contrast, is expressed only in postmitotic epithelial cells rather than in proliferative progenitors in the proximal airway.

Its subcellular location is the nucleus. Transcription factor essential for neural and some non-neural tissues development, such as retina and lung respectively. Binds to an 11-bp consensus sequence containing the invariant tetranucleotide 5'-ACGC-3'. During development of the central nervous system, is required to specify the amacrine and horizontal cell fates from multipotent retinal progenitors while suppressing the alternative photoreceptor cell fates through activating DLL4-NOTCH signaling. Also acts synergistically with ASCL1/MASH1 to activate DLL4-NOTCH signaling and drive commitment of p2 progenitors to the V2b interneuron fates during spinal cord neurogenesis. In development of non-neural tissues, plays an essential role in the specification of the atrioventricular canal and is indirectly required for patterning the distal airway during lung development. This is Forkhead box protein N4 (Foxn4) from Mus musculus (Mouse).